The following is a 297-amino-acid chain: Putative phosphate permease MJ0630 (297 aa).

9 helical membrane-spanning segments follow: residues 2–22 (ITIEISINLELIISFYLLFIL), 45–65 (LLILFSISVIIGSLFAKNVGS), 67–87 (VNSLSSDALTALIISALVMTL), 99–119 (TVIICSLIGLNFNSSNLYVFG), 121–141 (ILLSWILSPIIAVVIAYILYS), 154–174 (ITMIRYFLLISAAVVAFNLGS), 180–200 (VLGTFTTSQIIYIIGAIFLCL), 225–245 (FIAQLSGGLAVTIFTALGMPV), and 274–294 (NIIFWWVVAPIIALIIGFIIN).

Belongs to the inorganic phosphate transporter (PiT) (TC 2.A.20) family.

The protein resides in the cell membrane. Functionally, potential transporter for phosphate. In Methanocaldococcus jannaschii (strain ATCC 43067 / DSM 2661 / JAL-1 / JCM 10045 / NBRC 100440) (Methanococcus jannaschii), this protein is Putative phosphate permease MJ0630.